Reading from the N-terminus, the 476-residue chain is Stromelysin-2 (476 aa).

The signal sequence occupies residues 1–17 (MEPLAILALLSLPICSA). The propeptide at 18-99 (YPLHGAVTQG…PRCGVPDVGG (82 aa)) is activation peptide. Residues 90–97 (PRCGVPDV) carry the Cysteine switch motif. Positions 92, 168, 170, 183, 196, and 218 each coordinate Zn(2+). E219 is an active-site residue. Zn(2+) contacts are provided by H222 and H228. 4 Hemopexin repeats span residues 286-335 (PDKC…WPTL), 336-382 (PSDL…GFPP), 384-432 (VKKI…FPGI), and 433-476 (EPQV…WLLC). C289 and C476 are disulfide-bonded.

The protein belongs to the peptidase M10A family. Zn(2+) serves as cofactor. Ca(2+) is required as a cofactor. Expressed in small intestine. Weak levels in heart and lung.

Its subcellular location is the secreted. It localises to the extracellular space. The protein localises to the extracellular matrix. It catalyses the reaction Similar to stromelysin 1, but action on collagen types III, IV and V is weak.. Can degrade fibronectin, gelatins of type I, III, IV, and V; weakly collagens III, IV, and V. Activates procollagenase. The sequence is that of Stromelysin-2 (Mmp10) from Mus musculus (Mouse).